Reading from the N-terminus, the 93-residue chain is MKLFLVLIILLFEVLTDGARLKKCFNKVTGYCRKKCKVGERYEIGCLSGKLCCANDEEEKKHVSFKKPHQHSGEKLSVLQDYIILPTITIFTV.

The N-terminal stretch at Met-1–Gly-18 is a signal peptide. Cystine bridges form between Cys-24-Cys-52, Cys-32-Cys-46, and Cys-36-Cys-53.

This sequence belongs to the beta-defensin family.

Its subcellular location is the secreted. Functionally, has antibacterial activity. In Homo sapiens (Human), this protein is Beta-defensin 128 (DEFB128).